The chain runs to 580 residues: MTASGALQPALYLAVLIGLSVPLGTYMARVYQGERGLMASVLGPLERLAYRAAGVRPDQEMRWKDYAFAVLAFNLAGLLVLYALQRLQGVLPLNPEGMAAVPPDLAFNTAASFASNTNWQAYGGESTLSYLTQMAGLGVQNFVSAATGMAVLVALIRGITRKTADTVGSFWVDLVRSTLYILLPLSLLLAVLLVSQGVVQGFGGHQSASLLQAVKDQGGSAVVEQVIPMGPAASQIAIKQLGTNGGGFFNVNSAHPLENPTALSNFLEMLAILLIPAALCHTFGRMVGDRRQGWAVLAAMTAIFAVLLVACVASEQAGNPALSALGVDQAASALQAGGNMEGKEARFGITSSALWATATTAASNGSVNAMHDSFTPLGGLVPLWLMQLGEVVFGGVGSGLYGMLMFVVIAVFVAGLMVGRTPEYLGKKIEAFEMKMASLVVLFPAITVLVGTAIAVTTEGGQKGVFNPGPHGFSEVLYAFSSGANNNGSAFGGLGANSPFYNTAIGVAMLVGRYAVIVPVLALAGSLARKKLVPAGPGTLPTHTPLFVGLLTGTVLLVGALTFVPALALGPVVEHLEMTR.

10 helical membrane-spanning segments follow: residues 3-23 (ASGA…SVPL), 65-85 (DYAF…YALQ), 136-156 (GLGV…VALI), 179-199 (LYIL…QGVV), 263-283 (LSNF…CHTF), 293-313 (GWAV…ACVA), 399-419 (GLYG…LMVG), 436-456 (MASL…AIAV), 504-524 (AIGV…LALA), and 546-566 (LFVG…FVPA).

The protein belongs to the KdpA family. In terms of assembly, the system is composed of three essential subunits: KdpA, KdpB and KdpC.

The protein resides in the cell inner membrane. Part of the high-affinity ATP-driven potassium transport (or Kdp) system, which catalyzes the hydrolysis of ATP coupled with the electrogenic transport of potassium into the cytoplasm. This subunit binds the periplasmic potassium ions and delivers the ions to the membrane domain of KdpB through an intramembrane tunnel. This chain is Potassium-transporting ATPase potassium-binding subunit, found in Sorangium cellulosum (strain So ce56) (Polyangium cellulosum (strain So ce56)).